A 213-amino-acid chain; its full sequence is Orotidine 5'-phosphate decarboxylase (213 aa).

Substrate contacts are provided by residues aspartate 6, lysine 25, 52–61 (DLKLADIDNT), serine 109, 158–168 (PGVGAQGAMIG), glycine 181, and arginine 182. Lysine 54 functions as the Proton donor in the catalytic mechanism.

This sequence belongs to the OMP decarboxylase family. Type 1 subfamily. As to quaternary structure, homodimer.

The catalysed reaction is orotidine 5'-phosphate + H(+) = UMP + CO2. It functions in the pathway pyrimidine metabolism; UMP biosynthesis via de novo pathway; UMP from orotate: step 2/2. Catalyzes the decarboxylation of orotidine 5'-monophosphate (OMP) to uridine 5'-monophosphate (UMP). This Sulfurisphaera tokodaii (strain DSM 16993 / JCM 10545 / NBRC 100140 / 7) (Sulfolobus tokodaii) protein is Orotidine 5'-phosphate decarboxylase.